We begin with the raw amino-acid sequence, 367 residues long: Endophilin-A2 (367 aa).

The segment at 1-21 is membrane-binding amphipathic helix; sequence MSVAGLKKQFYKASQLVSEKV. In terms of domain architecture, BAR spans 18–249; that stretch reads SEKVGGAEGT…LKRRMREASS (232 aa). Residues 60 to 87 form a required for dimerization upon membrane association region; that stretch reads PNPASRAKLTMLNTMSKIRGQVKNPGYP. Residues 181–250 are a coiled coil; the sequence is EELRQAMEKF…KRRMREASSR (70 aa). Positions 218-254 are interaction with ARC; it reads LVDAQLDYHRQAVQILDELAEKLKRRMREASSRPRRE. Residues 243–293 are disordered; sequence RMREASSRPRREYKPKPRETYDFGESDQSNGGFSCTPTPKVSASSSFRSDK. Positions 245 to 263 are enriched in basic and acidic residues; sequence REASSRPRREYKPKPRETY. Over residues 268-289 the composition is skewed to polar residues; the sequence is SDQSNGGFSCTPTPKVSASSSF. The SH3 domain maps to 305 to 364; sequence LDQPCCKALYDFEPENDGELGFKEGDIITLTNQIDENWYEGMINGQSGFFPLNYVEVLVP.

The protein belongs to the endophilin family. As to quaternary structure, interacts with ARC. Interacts with SYNJ1 and DNM1. As to expression, highest level in central region of the theca of developing follicles (at protein level). Expressed at highest level in brain and testis, at high level in kidney, lung and stroma, low level in spleen and adrenal gland (at protein level). Expressed in most tissue with highest levels in small ovarian follicles, brain and testis.

The protein resides in the cytoplasm. Its subcellular location is the early endosome membrane. It localises to the cell projection. The protein localises to the podosome. Functionally, implicated in endocytosis. May recruit other proteins to membranes with high curvature. In Gallus gallus (Chicken), this protein is Endophilin-A2.